A 147-amino-acid chain; its full sequence is Hemoglobin subunit beta (147 aa).

Val2 carries the N-acetylvaline modification. One can recognise a Globin domain in the interval 3–147; the sequence is HLTGEEKAAV…VANALAHKYH (145 aa). Thr13 bears the Phosphothreonine mark. Ser45 carries the phosphoserine modification. Lys60 is subject to N6-acetyllysine. His64 lines the heme b pocket. Lys83 carries the post-translational modification N6-acetyllysine. His93 is a binding site for heme b. At Cys94 the chain carries S-nitrosocysteine. Lys145 is subject to N6-acetyllysine.

The protein belongs to the globin family. As to quaternary structure, heterotetramer of two alpha chains and two beta chains. Red blood cells.

Involved in oxygen transport from the lung to the various peripheral tissues. This Cheracebus torquatus (Collared titi monkey) protein is Hemoglobin subunit beta (HBB).